The sequence spans 254 residues: Type III pantothenate kinase (254 aa).

6–13 (DVGNSNIV) contacts ATP. Residues Y100 and 107–110 (GADR) contribute to the substrate site. D109 acts as the Proton acceptor in catalysis. D129 provides a ligand contact to K(+). Residue T132 participates in ATP binding. T184 lines the substrate pocket.

This sequence belongs to the type III pantothenate kinase family. As to quaternary structure, homodimer. The cofactor is NH4(+). K(+) is required as a cofactor.

Its subcellular location is the cytoplasm. It catalyses the reaction (R)-pantothenate + ATP = (R)-4'-phosphopantothenate + ADP + H(+). It participates in cofactor biosynthesis; coenzyme A biosynthesis; CoA from (R)-pantothenate: step 1/5. In terms of biological role, catalyzes the phosphorylation of pantothenate (Pan), the first step in CoA biosynthesis. The protein is Type III pantothenate kinase of Pelobacter propionicus (strain DSM 2379 / NBRC 103807 / OttBd1).